The following is a 361-amino-acid chain: Chorismate synthase (361 aa).

2 residues coordinate NADP(+): R48 and R54. Residues 125 to 127 (RSS), 238 to 239 (NA), G278, 293 to 297 (KPTSS), and R319 each bind FMN.

The protein belongs to the chorismate synthase family. Homotetramer. FMNH2 is required as a cofactor.

It catalyses the reaction 5-O-(1-carboxyvinyl)-3-phosphoshikimate = chorismate + phosphate. Its pathway is metabolic intermediate biosynthesis; chorismate biosynthesis; chorismate from D-erythrose 4-phosphate and phosphoenolpyruvate: step 7/7. Its function is as follows. Catalyzes the anti-1,4-elimination of the C-3 phosphate and the C-6 proR hydrogen from 5-enolpyruvylshikimate-3-phosphate (EPSP) to yield chorismate, which is the branch point compound that serves as the starting substrate for the three terminal pathways of aromatic amino acid biosynthesis. This reaction introduces a second double bond into the aromatic ring system. This chain is Chorismate synthase, found in Vibrio vulnificus (strain CMCP6).